A 188-amino-acid chain; its full sequence is ATP synthase subunit b, chloroplastic (188 aa).

A helical transmembrane segment spans residues 35 to 57 (LINLAVVIGVLVYFGKGVLTTLL).

This sequence belongs to the ATPase B chain family. In terms of assembly, F-type ATPases have 2 components, F(1) - the catalytic core - and F(0) - the membrane proton channel. F(1) has five subunits: alpha(3), beta(3), gamma(1), delta(1), epsilon(1). F(0) has four main subunits: a(1), b(1), b'(1) and c(10-14). The alpha and beta chains form an alternating ring which encloses part of the gamma chain. F(1) is attached to F(0) by a central stalk formed by the gamma and epsilon chains, while a peripheral stalk is formed by the delta, b and b' chains.

The protein localises to the plastid. It localises to the chloroplast thylakoid membrane. Its function is as follows. F(1)F(0) ATP synthase produces ATP from ADP in the presence of a proton or sodium gradient. F-type ATPases consist of two structural domains, F(1) containing the extramembraneous catalytic core and F(0) containing the membrane proton channel, linked together by a central stalk and a peripheral stalk. During catalysis, ATP synthesis in the catalytic domain of F(1) is coupled via a rotary mechanism of the central stalk subunits to proton translocation. Component of the F(0) channel, it forms part of the peripheral stalk, linking F(1) to F(0). The chain is ATP synthase subunit b, chloroplastic from Zygnema circumcarinatum (Green alga).